The primary structure comprises 338 residues: UDP-3-O-acylglucosamine N-acyltransferase (338 aa).

His243 (proton acceptor) is an active-site residue.

It belongs to the transferase hexapeptide repeat family. LpxD subfamily. In terms of assembly, homotrimer.

The catalysed reaction is a UDP-3-O-[(3R)-3-hydroxyacyl]-alpha-D-glucosamine + a (3R)-hydroxyacyl-[ACP] = a UDP-2-N,3-O-bis[(3R)-3-hydroxyacyl]-alpha-D-glucosamine + holo-[ACP] + H(+). It participates in bacterial outer membrane biogenesis; LPS lipid A biosynthesis. Its function is as follows. Catalyzes the N-acylation of UDP-3-O-acylglucosamine using 3-hydroxyacyl-ACP as the acyl donor. Is involved in the biosynthesis of lipid A, a phosphorylated glycolipid that anchors the lipopolysaccharide to the outer membrane of the cell. This chain is UDP-3-O-acylglucosamine N-acyltransferase, found in Amoebophilus asiaticus (strain 5a2).